Reading from the N-terminus, the 39-residue chain is Cecropin-D-like peptide (39 aa).

In terms of tissue distribution, hemolymph.

It is found in the secreted. In terms of biological role, cecropins have lytic and antibacterial activity against several Gram-positive and Gram-negative bacteria. Has antibacterial activity against the Gram-positive bacteria M.luteus (MIC=34.4 uM), L.monocytogenes (MIC=34.4 uM), and S.lutea (MIC=34.4 uM), and the Gram-negative bacterium E.coli D31 (MIC=8.6 uM). Lacks antibacterial activity against the Gram-positive bacterium B.circulans, and the Gram-negative bacteria E.coli ATCC 25922 and S.typhimurium. Has antifungal activity against A.niger, but lacks antifungal activity against C.albicans, C.wickerhamii, F.oxysporum, P.pastoris, P.tannophilus, S.cerevisiae, T.harzianum, and Z.marxianus. The sequence is that of Cecropin-D-like peptide from Galleria mellonella (Greater wax moth).